A 557-amino-acid polypeptide reads, in one-letter code: Formate--tetrahydrofolate ligase 2 (557 aa).

66–73 is an ATP binding site; the sequence is TPAGEGKT.

Belongs to the formate--tetrahydrofolate ligase family.

The enzyme catalyses (6S)-5,6,7,8-tetrahydrofolate + formate + ATP = (6R)-10-formyltetrahydrofolate + ADP + phosphate. It functions in the pathway one-carbon metabolism; tetrahydrofolate interconversion. The sequence is that of Formate--tetrahydrofolate ligase 2 from Streptococcus pyogenes serotype M28 (strain MGAS6180).